The primary structure comprises 430 residues: Trigger factor (430 aa).

The PPIase FKBP-type domain maps to 163-248 (GNIAIIDFKG…VKEIKVKEIP (86 aa)).

This sequence belongs to the FKBP-type PPIase family. Tig subfamily.

It localises to the cytoplasm. The enzyme catalyses [protein]-peptidylproline (omega=180) = [protein]-peptidylproline (omega=0). Functionally, involved in protein export. Acts as a chaperone by maintaining the newly synthesized protein in an open conformation. Functions as a peptidyl-prolyl cis-trans isomerase. In Clostridium kluyveri (strain NBRC 12016), this protein is Trigger factor.